Consider the following 280-residue polypeptide: Transmembrane protein 45B (280 aa).

7 helical membrane passes run histidine 7 to leucine 27, leucine 49 to valine 69, methionine 96 to leucine 116, leucine 120 to valine 140, isoleucine 150 to phenylalanine 170, leucine 184 to glycine 204, and valine 216 to isoleucine 236.

It belongs to the TMEM45 family.

The protein resides in the membrane. The polypeptide is Transmembrane protein 45B (tmem45b) (Xenopus tropicalis (Western clawed frog)).